The chain runs to 475 residues: tRNA-2-methylthio-N(6)-dimethylallyladenosine synthase (475 aa).

A compositionally biased stretch (basic and acidic residues) spans 1 to 10 (MQETTVKRDG). Residues 1-22 (MQETTVKRDGASPSDAGTPATT) form a disordered region. The region spanning 27 to 144 (GKLYIRTFGC…LPDLIKRRRA (118 aa)) is the MTTase N-terminal domain. [4Fe-4S] cluster-binding residues include cysteine 36, cysteine 73, cysteine 107, cysteine 181, cysteine 185, and cysteine 188. Residues 167-400 (RVDGATAFVS…QALINQQAAA (234 aa)) enclose the Radical SAM core domain. The TRAM domain maps to 403-466 (QGMIGTRQRV…TNSLRGRVAG (64 aa)).

The protein belongs to the methylthiotransferase family. MiaB subfamily. In terms of assembly, monomer. The cofactor is [4Fe-4S] cluster.

The protein localises to the cytoplasm. It catalyses the reaction N(6)-dimethylallyladenosine(37) in tRNA + (sulfur carrier)-SH + AH2 + 2 S-adenosyl-L-methionine = 2-methylsulfanyl-N(6)-dimethylallyladenosine(37) in tRNA + (sulfur carrier)-H + 5'-deoxyadenosine + L-methionine + A + S-adenosyl-L-homocysteine + 2 H(+). Functionally, catalyzes the methylthiolation of N6-(dimethylallyl)adenosine (i(6)A), leading to the formation of 2-methylthio-N6-(dimethylallyl)adenosine (ms(2)i(6)A) at position 37 in tRNAs that read codons beginning with uridine. The chain is tRNA-2-methylthio-N(6)-dimethylallyladenosine synthase from Bordetella bronchiseptica (strain ATCC BAA-588 / NCTC 13252 / RB50) (Alcaligenes bronchisepticus).